Here is a 594-residue protein sequence, read N- to C-terminus: APOBEC1 complementation factor (594 aa).

RRM domains are found at residues 56–134, 136–218, and 231–303; these read CEIF…ASVD, CRLF…WAEP, and KILY…LAKP. Residues 359 to 408 are required for nuclear localization; sequence HFPATKGHLSNRALIRTPSVREIYMNVPVGAAGVRGLGGRGYLAYTGLGR. Threonine 498 is subject to Phosphothreonine.

In terms of assembly, part of the apolipoprotein B mRNA editing complex with APOBEC1. Interacts with TNPO2; TNPO2 may be responsible for transport of A1CF into the nucleus. Interacts with SYNCRIP. Interacts with CELF2/CUGBP2. Interacts with RBM47. Isoforms 1 and 2 are widely expressed while isoforms 3 and 4 are restricted to liver and small intestine.

The protein localises to the nucleus. The protein resides in the endoplasmic reticulum. Its subcellular location is the cytoplasm. In terms of biological role, essential component of the apolipoprotein B mRNA editing enzyme complex which is responsible for the postranscriptional editing of a CAA codon for Gln to a UAA codon for stop in APOB mRNA. Binds to APOB mRNA and is probably responsible for docking the catalytic subunit, APOBEC1, to the mRNA to allow it to deaminate its target cytosine. The complex also seems to protect the edited APOB mRNA from nonsense-mediated decay. This is APOBEC1 complementation factor (A1cf) from Rattus norvegicus (Rat).